Consider the following 792-residue polypeptide: Lon protease (792 aa).

The Lon N-terminal domain maps to 16-211; sequence DAVVVVPVSN…KVSAFLAQRL (196 aa). Residue 361 to 368 participates in ATP binding; it reads GPPGVGKT. In terms of domain architecture, Lon proteolytic spans 597 to 778; it reads TSVPGVATGL…EDAIEAGLDP (182 aa). Active-site residues include S684 and K727.

This sequence belongs to the peptidase S16 family. As to quaternary structure, homohexamer. Organized in a ring with a central cavity.

Its subcellular location is the cytoplasm. The catalysed reaction is Hydrolysis of proteins in presence of ATP.. ATP-dependent serine protease that mediates the selective degradation of mutant and abnormal proteins as well as certain short-lived regulatory proteins. Required for cellular homeostasis and for survival from DNA damage and developmental changes induced by stress. Degrades polypeptides processively to yield small peptide fragments that are 5 to 10 amino acids long. Binds to DNA in a double-stranded, site-specific manner. The chain is Lon protease from Phenylobacterium zucineum (strain HLK1).